Here is a 406-residue protein sequence, read N- to C-terminus: Phosphopentomutase (406 aa).

Mn(2+)-binding residues include Asp10, Asp305, His310, Asp346, His347, and His358.

Belongs to the phosphopentomutase family. Mn(2+) serves as cofactor.

The protein localises to the cytoplasm. The enzyme catalyses 2-deoxy-alpha-D-ribose 1-phosphate = 2-deoxy-D-ribose 5-phosphate. It catalyses the reaction alpha-D-ribose 1-phosphate = D-ribose 5-phosphate. Its pathway is carbohydrate degradation; 2-deoxy-D-ribose 1-phosphate degradation; D-glyceraldehyde 3-phosphate and acetaldehyde from 2-deoxy-alpha-D-ribose 1-phosphate: step 1/2. Its function is as follows. Isomerase that catalyzes the conversion of deoxy-ribose 1-phosphate (dRib-1-P) and ribose 1-phosphate (Rib-1-P) to deoxy-ribose 5-phosphate (dRib-5-P) and ribose 5-phosphate (Rib-5-P), respectively. The polypeptide is Phosphopentomutase (Vibrio cholerae serotype O1 (strain ATCC 39541 / Classical Ogawa 395 / O395)).